The sequence spans 265 residues: Apolipoprotein A-I (265 aa).

An N-terminal signal peptide occupies residues 1 to 18 (MKALVLTLAVLFFTGSQA). 2 tandem repeats follow at residues 67 to 88 (LKLL…EQLG) and 89 to 110 (PVTQ…QEMN). The 10 X approximate tandem repeats stretch occupies residues 67–265 (LKLLDNWDSL…DEASKKLNAQ (199 aa)). At M109 the chain carries Methionine sulfoxide. The stretch at 111–121 (KDLEEVKQKVQ) is one 3; half-length repeat. 5 repeat units span residues 122-142 (PYLD…RQKV), 144-165 (PLGE…DKLT), 166-187 (PLAE…QQLA), 188-209 (PYSD…EGGG), and 210-230 (SLAE…EKAK). A 9; half-length repeat occupies 231 to 241 (PALEDLRQGLL). Repeat 10 spans residues 242–265 (PVLESLKVSILAAIDEASKKLNAQ).

This sequence belongs to the apolipoprotein A1/A4/E family. As to quaternary structure, homodimer. Interacts with APOA1BP and CLU. Component of a sperm activating protein complex (SPAP), consisting of APOA1, an immunoglobulin heavy chain, an immunoglobulin light chain and albumin. Interacts with NDRG1. Interacts with SCGB3A2. Interacts with NAXE and YJEFN3. In terms of processing, glycosylated. Palmitoylated. Post-translationally, phosphorylation sites are present in the extracellular medium. Major protein of plasma HDL, also found in chylomicrons.

Its subcellular location is the secreted. Participates in the reverse transport of cholesterol from tissues to the liver for excretion by promoting cholesterol efflux from tissues and by acting as a cofactor for the lecithin cholesterol acyltransferase (LCAT). As part of the SPAP complex, activates spermatozoa motility. In Physeter macrocephalus (Sperm whale), this protein is Apolipoprotein A-I (APOA1).